A 308-amino-acid chain; its full sequence is Pantothenate synthetase (308 aa).

An ATP-binding site is contributed by 39-46; sequence MGALHDGH. The active-site Proton donor is His-46. Gln-71 is a (R)-pantoate binding site. Residue Gln-71 participates in beta-alanine binding. 157 to 160 provides a ligand contact to ATP; that stretch reads GEKD. Gln-163 is a binding site for (R)-pantoate. ATP contacts are provided by residues Val-186 and 194–197; that span reads MSSR. Residues 286-308 are disordered; sequence IETPAGTAGPDGDRQYAQSPWRN.

The protein belongs to the pantothenate synthetase family. In terms of assembly, homodimer.

The protein localises to the cytoplasm. It carries out the reaction (R)-pantoate + beta-alanine + ATP = (R)-pantothenate + AMP + diphosphate + H(+). The protein operates within cofactor biosynthesis; (R)-pantothenate biosynthesis; (R)-pantothenate from (R)-pantoate and beta-alanine: step 1/1. Catalyzes the condensation of pantoate with beta-alanine in an ATP-dependent reaction via a pantoyl-adenylate intermediate. This chain is Pantothenate synthetase, found in Mycobacterium avium (strain 104).